The sequence spans 893 residues: cGMP-specific 3',5'-cyclic phosphodiesterase (893 aa).

GAF domains are found at residues 21-173 (DIDV…GIGI) and 205-390 (NLEC…GLGI). A PDEase domain is found at 420-743 (GQDQTEKLIQ…RNWQDLAEKV (324 aa)). The Proton donor role is filled by His-496. A divalent metal cation contacts are provided by His-500, His-536, Asp-537, and Asp-647. 2 disordered regions span residues 784–807 (QQSQ…RLSI) and 844–893 (HVSE…CALL). Basic and acidic residues-rich tracts occupy residues 789 to 800 (GGDDSHTPEHQR) and 844 to 853 (HVSEDMDDKS). The segment covering 864–880 (SVGRMSASSSTSSAGTV) has biased composition (low complexity). Residues 883-893 (SKKRSKLCALL) are compositionally biased toward basic residues. Position 890 is a cysteine methyl ester (Cys-890). Cys-890 is lipidated: S-farnesyl cysteine. Residues 891–893 (ALL) constitute a propeptide, removed in mature form.

The protein belongs to the cyclic nucleotide phosphodiesterase family. In terms of assembly, interacts with PrBP. The cofactor is a divalent metal cation.

The protein resides in the cell membrane. It catalyses the reaction 3',5'-cyclic GMP + H2O = GMP + H(+). Functionally, has a role regulating cGMP transport in Malpighian tubule principal cells. This is cGMP-specific 3',5'-cyclic phosphodiesterase from Drosophila virilis (Fruit fly).